The chain runs to 356 residues: ATP-dependent 6-phosphofructokinase (356 aa).

Residues G15, 78 to 79, and 115 to 118 each bind ATP; these read KG and GEGT. E116 serves as a coordination point for Mg(2+). Substrate-binding positions include 138–140, R175, 182–184, E235, R272, and 278–281; these read TID, MGR, and HLQR. D140 serves as the catalytic Proton acceptor.

Belongs to the phosphofructokinase type A (PFKA) family. Mixed-substrate PFK group III subfamily. As to quaternary structure, homodimer or homotetramer. Requires Mg(2+) as cofactor.

Its subcellular location is the cytoplasm. It carries out the reaction beta-D-fructose 6-phosphate + ATP = beta-D-fructose 1,6-bisphosphate + ADP + H(+). It participates in carbohydrate degradation; glycolysis; D-glyceraldehyde 3-phosphate and glycerone phosphate from D-glucose: step 3/4. Functionally, catalyzes the phosphorylation of D-fructose 6-phosphate to fructose 1,6-bisphosphate by ATP, the first committing step of glycolysis. In Chloroflexus aggregans (strain MD-66 / DSM 9485), this protein is ATP-dependent 6-phosphofructokinase.